Here is a 481-residue protein sequence, read N- to C-terminus: Glutamyl-tRNA(Gln) amidotransferase subunit A (481 aa).

Catalysis depends on charge relay system residues lysine 76 and serine 151. The active-site Acyl-ester intermediate is serine 175.

The protein belongs to the amidase family. GatA subfamily. Heterotrimer of A, B and C subunits.

It catalyses the reaction L-glutamyl-tRNA(Gln) + L-glutamine + ATP + H2O = L-glutaminyl-tRNA(Gln) + L-glutamate + ADP + phosphate + H(+). Allows the formation of correctly charged Gln-tRNA(Gln) through the transamidation of misacylated Glu-tRNA(Gln) in organisms which lack glutaminyl-tRNA synthetase. The reaction takes place in the presence of glutamine and ATP through an activated gamma-phospho-Glu-tRNA(Gln). In Chlorobaculum parvum (strain DSM 263 / NCIMB 8327) (Chlorobium vibrioforme subsp. thiosulfatophilum), this protein is Glutamyl-tRNA(Gln) amidotransferase subunit A.